The chain runs to 1230 residues: ABC transporter B family member 5 (1230 aa).

The next 6 membrane-spanning stretches (helical) occupy residues 27–47, 78–98, 154–174, 177–197, 253–273, and 286–306; these read VLLM…SPLM, LVYL…CWMI, FIQL…RGWL, LVML…AIIV, GFVT…TYAL, and GYTG…SIAL. One can recognise an ABC transmembrane type-1 1 domain in the interval 30 to 318; sequence MIVGSIGAIA…ASPCLTAFTA (289 aa). Residues 353–589 enclose the ABC transporter 1 domain; the sequence is IELRDVCFSY…HEGAYSQLLR (237 aa). Position 388–395 (388–395) interacts with ATP; it reads GESGSGKS. N-linked (GlcNAc...) asparagine glycosylation is found at asparagine 540, asparagine 615, and asparagine 616. The tract at residues 602–621 is disordered; that stretch reads ISDGSISSGSSRGNNSTRQD. Residues 603-617 are compositionally biased toward low complexity; sequence SDGSISSGSSRGNNS. A run of 2 helical transmembrane segments spans residues 662-682 and 707-727; these read ILIL…IFGI and MIFV…NYLF. In terms of domain architecture, ABC transmembrane type-1 2 spans 663-950; it reads LILGTLVGAV…ASSFAPDSSK (288 aa). N-linked (GlcNAc...) asparagine glycosylation is present at asparagine 759. 3 helical membrane passes run 798 to 818, 889 to 909, and 924 to 944; these read IIAF…IPFI, GVGF…CFYV, and VFQV…ASSF. The ABC transporter 2 domain maps to 985 to 1223; the sequence is IELCHISFTY…EGGVYASLVQ (239 aa). 1020-1027 is an ATP binding site; that stretch reads GESGSGKS. Asparagine 1074, asparagine 1174, and asparagine 1227 each carry an N-linked (GlcNAc...) asparagine glycan.

It belongs to the ABC transporter superfamily. ABCB family. Multidrug resistance exporter (TC 3.A.1.201) subfamily.

The protein localises to the membrane. This chain is ABC transporter B family member 5 (ABCB5), found in Arabidopsis thaliana (Mouse-ear cress).